The chain runs to 171 residues: UPF0398 protein MGAS10270_Spy1470 (171 aa).

This sequence belongs to the UPF0398 family.

The protein is UPF0398 protein MGAS10270_Spy1470 of Streptococcus pyogenes serotype M2 (strain MGAS10270).